The following is a 263-amino-acid chain: Putative hydro-lyase GK2103 (263 aa).

The protein belongs to the D-glutamate cyclase family.

In Geobacillus kaustophilus (strain HTA426), this protein is Putative hydro-lyase GK2103.